Consider the following 141-residue polypeptide: Large ribosomal subunit protein uL11A (141 aa).

This sequence belongs to the universal ribosomal protein uL11 family. In terms of assembly, part of the ribosomal stalk of the 50S ribosomal subunit. Interacts with L10 and the large rRNA to form the base of the stalk. L10 forms an elongated spine to which L12 dimers bind in a sequential fashion forming a multimeric L10(L12)X complex. Post-translationally, one or more lysine residues are methylated.

Forms part of the ribosomal stalk which helps the ribosome interact with GTP-bound translation factors. The sequence is that of Large ribosomal subunit protein uL11A from Halalkalibacterium halodurans (strain ATCC BAA-125 / DSM 18197 / FERM 7344 / JCM 9153 / C-125) (Bacillus halodurans).